A 417-amino-acid polypeptide reads, in one-letter code: Protein-lysine 6-oxidase (417 aa).

The N-terminal stretch at 1–21 (MRFAWTVLLLGPLQLCALVHC) is a signal peptide. Positions 22–168 (APPAAGQQQP…PPSRVDGMVG (147 aa)) are cleaved as a propeptide — removed by BMP1. A disordered region spans residues 64-89 (YQPQRRRDPGAAVPGAANASAQQPRT). A compositionally biased stretch (low complexity) spans 73–84 (GAAVPGAANASA). Asn81, Asn97, and Asn144 each carry an N-linked (GlcNAc...) asparagine glycan. The segment at 137–174 (AGASRAENQTAPGEVPALSNLRPPSRVDGMVGDDPYNP) is disordered. Position 187 is a sulfotyrosine (Tyr187). The lysyl-oxidase like stretch occupies residues 213–417 (PDLVADPYYI…YASGCTISPY (205 aa)). 5 cysteine pairs are disulfide-bonded: Cys238–Cys244, Cys291–Cys340, Cys324–Cys330, Cys351–Cys361, and Cys398–Cys412. His292, His294, and His296 together coordinate Cu cation. The lysine tyrosylquinone (Lys-Tyr) cross-link spans 320 to 355 (KASFCLEDTSCDYGYHRRFACTAHTQGLSPGCYDTY). Tyr355 is subject to 2',4',5'-topaquinone.

The protein belongs to the lysyl oxidase family. As to quaternary structure, interacts with MFAP4. Interacts (via propeptide) with EFEMP2; this interaction is strong and facilitates formation of ternary complexes with ELN during elastic fiber assembly; this interaction limits interaction of EFEMP2 with FBLN5. It depends on Cu cation as a cofactor. Lysine tyrosylquinone residue is required as a cofactor. The lysine tyrosylquinone cross-link (LTQ) is generated by condensation of the epsilon-amino group of a lysine with a topaquinone produced by oxidation of tyrosine. In terms of processing, proteolytically cleaved by BMP1 which removes the propeptide. Also proteolytically cleaved by ADAMTS2 and ADAMTS14, but not by ADAMTS3, at an additional cleavage site downstream of the BMP1 cleavage site. The propeptide plays a role in directing the deposition of this enzyme to elastic fibers, via interaction with tropoelastin. Cleavage by BMP1 to remove the propeptide does not increase enzymatic activity but increases binding to collagen. Cleavage by ADAMTS2 produces a form with reduced collagen-binding activity. Post-translationally, sulfated at Tyr-187 and also at either Tyr-183 or Tyr-184 which enhances binding to collagen. As to expression, heart, placenta, skeletal muscle, kidney, lung and pancreas.

It is found in the secreted. The protein localises to the extracellular space. It carries out the reaction L-lysyl-[protein] + O2 + H2O = (S)-2-amino-6-oxohexanoyl-[protein] + H2O2 + NH4(+). Its function is as follows. Responsible for the post-translational oxidative deamination of peptidyl lysine residues in precursors to fibrous collagen and elastin. Regulator of Ras expression. May play a role in tumor suppression. Plays a role in the aortic wall architecture. This is Protein-lysine 6-oxidase (LOX) from Homo sapiens (Human).